The following is a 259-amino-acid chain: Expansin-B6 (259 aa).

An N-terminal signal peptide occupies residues 1-24 (MASSSHRYFALLALFAVSLKFCYC). An N-linked (GlcNAc...) asparagine glycan is attached at asparagine 26. The Expansin-like EG45 domain maps to 52–160 (GGACGFAVAN…IRVECLYRRT (109 aa)). Disulfide bonds link cysteine 55/cysteine 82, cysteine 85/cysteine 155, and cysteine 90/cysteine 96. In terms of domain architecture, Expansin-like CBD spans 173–254 (YYISFVVEYE…NWKPNETYRS (82 aa)). Asparagine 249 carries an N-linked (GlcNAc...) asparagine glycan.

Belongs to the expansin family. Expansin B subfamily.

It is found in the secreted. The protein resides in the cell wall. Its subcellular location is the membrane. May cause loosening and extension of plant cell walls by disrupting non-covalent bonding between cellulose microfibrils and matrix glucans. This is Expansin-B6 from Arabidopsis thaliana (Mouse-ear cress).